The following is a 220-amino-acid chain: UPF0319 protein YccT (220 aa).

A signal peptide spans 1-20 (MKAGTLTLLIALCLPISVSA).

It belongs to the UPF0319 family.

This Escherichia fergusonii (strain ATCC 35469 / DSM 13698 / CCUG 18766 / IAM 14443 / JCM 21226 / LMG 7866 / NBRC 102419 / NCTC 12128 / CDC 0568-73) protein is UPF0319 protein YccT.